The following is a 253-amino-acid chain: Mediator of RNA polymerase II transcription subunit 10 (253 aa).

3 disordered regions span residues 32-63 (YDTNPSSSNNNTPTSSRASGGGGGGGGGHASS), 88-109 (LPSSPSSGPSNNQPQQGTTELE), and 206-253 (VEAT…QSGQ). Low complexity predominate over residues 34-47 (TNPSSSNNNTPTSS). Residues 50-60 (SGGGGGGGGGH) show a composition bias toward gly residues. Residues 88–104 (LPSSPSSGPSNNQPQQG) are compositionally biased toward low complexity. Residues 231-253 (SAGGEGQQGQGQGQQGQGQQSGQ) are compositionally biased toward gly residues.

The protein belongs to the Mediator complex subunit 10 family. In terms of assembly, component of the Mediator complex.

Its subcellular location is the nucleus. In terms of biological role, component of the Mediator complex, a coactivator involved in the regulated transcription of nearly all RNA polymerase II-dependent genes. Mediator functions as a bridge to convey information from gene-specific regulatory proteins to the basal RNA polymerase II transcription machinery. Mediator is recruited to promoters by direct interactions with regulatory proteins and serves as a scaffold for the assembly of a functional preinitiation complex with RNA polymerase II and the general transcription factors. The chain is Mediator of RNA polymerase II transcription subunit 10 (nut2) from Neurospora crassa (strain ATCC 24698 / 74-OR23-1A / CBS 708.71 / DSM 1257 / FGSC 987).